Consider the following 92-residue polypeptide: Ferredoxin-like protein in nif region (92 aa).

4Fe-4S ferredoxin-type domains follow at residues 2–28 (ALKI…SLAG) and 29–65 (PHFE…LADG). C9, C12, C15, C19, C38, C41, C50, and C54 together coordinate [4Fe-4S] cluster.

Requires [4Fe-4S] cluster as cofactor.

In terms of biological role, ferredoxins are iron-sulfur proteins that transfer electrons in a wide variety of metabolic reactions. This is Ferredoxin-like protein in nif region from Azotobacter vinelandii.